Reading from the N-terminus, the 608-residue chain is AAA ATPase forming ring-shaped complexes (608 aa).

Positions 45-79 (AQEYDAVLRRLSAAEATRDNMSRQIRGAGEKNRKL) form a coiled coil. Position 302-307 (302-307 (GNGKTM)) interacts with ATP.

It belongs to the AAA ATPase family. As to quaternary structure, homohexamer. Assembles into a hexameric ring structure.

The polypeptide is AAA ATPase forming ring-shaped complexes (Rothia mucilaginosa (strain DY-18) (Stomatococcus mucilaginosus)).